A 252-amino-acid polypeptide reads, in one-letter code: Probable truncated L-gulonolactone oxidase 7, mitochondrial (252 aa).

A mitochondrion-targeting transit peptide spans M1 to Y102.

Belongs to the oxygen-dependent FAD-linked oxidoreductase family.

The protein resides in the mitochondrion. The enzyme catalyses L-gulono-1,4-lactone + O2 = L-ascorbate + H2O2 + H(+). The protein operates within cofactor biosynthesis; L-ascorbate biosynthesis. In terms of biological role, may be involved in the biosynthesis of ascorbic acid. This chain is Probable truncated L-gulonolactone oxidase 7, mitochondrial, found in Arabidopsis thaliana (Mouse-ear cress).